The following is a 269-amino-acid chain: Cytochrome c oxidase subunit 3 (269 aa).

Residues 1-22 (MTHLERSRHQQHPFHMVMPSPW) are Mitochondrial matrix-facing. The chain crosses the membrane as a helical span at residues 23–41 (PIVVSFALLSLALSTALTM). The Mitochondrial intermembrane portion of the chain corresponds to 42–48 (HGYIGNM). The helical transmembrane segment at 49–73 (NMVYLALFVLLTSSILWFRDIVAEA) threads the bilayer. Over 74 to 80 (TYLGDHT) the chain is Mitochondrial matrix. The chain crosses the membrane as a helical span at residues 81 to 114 (MAVRKGINLGFLMFVLSEVLIFAGLFWAYFHSAM). Residues 115–137 (SPDVTLGACWPPVGIEAVQPTEL) lie on the Mitochondrial intermembrane side of the membrane. A helical transmembrane segment spans residues 138 to 161 (PLLNTIILLSSGATVTYSHHALIA). The Mitochondrial matrix portion of the chain corresponds to 162 to 164 (GNR). Residues 165–188 (NKALSGLLITFWLIVIFVTCQYIE) traverse the membrane as a helical segment. Over 189-201 (YTNAAFTISDGVY) the chain is Mitochondrial intermembrane. Residues 202–230 (GSVFYAGTGLHFLHMVMLAAMLGVNYWRM) traverse the membrane as a helical segment. Topologically, residues 231 to 248 (RNYHLTAGHHVGYETTII) are mitochondrial matrix. The chain crosses the membrane as a helical span at residues 249 to 265 (YTHVLDVIWLFLYVVFY). Residues 266–269 (WWGV) lie on the Mitochondrial intermembrane side of the membrane.

The protein belongs to the cytochrome c oxidase subunit 3 family. In terms of assembly, component of the cytochrome c oxidase (complex IV, CIV), a multisubunit enzyme composed of 12 subunits. The complex is composed of a catalytic core of 3 subunits COX1, COX2 and COX3, encoded in the mitochondrial DNA, and 9 supernumerary subunits COX4, COX5A (or COX5B), COX6, COX7, COX8, COX9, COX12, COX13 and COX26, which are encoded in the nuclear genome. The complex exists as a monomer or a dimer and forms supercomplexes (SCs) in the inner mitochondrial membrane with a dimer of ubiquinol-cytochrome c oxidoreductase (cytochrome b-c1 complex, complex III, CIII), resulting in 2 different assemblies (supercomplexes III(2)IV and III(2)IV(2)). Post-translationally, the N-terminus is blocked.

The protein resides in the mitochondrion inner membrane. It catalyses the reaction 4 Fe(II)-[cytochrome c] + O2 + 8 H(+)(in) = 4 Fe(III)-[cytochrome c] + 2 H2O + 4 H(+)(out). Its function is as follows. Component of the cytochrome c oxidase, the last enzyme in the mitochondrial electron transport chain which drives oxidative phosphorylation. The respiratory chain contains 3 multisubunit complexes succinate dehydrogenase (complex II, CII), ubiquinol-cytochrome c oxidoreductase (cytochrome b-c1 complex, complex III, CIII) and cytochrome c oxidase (complex IV, CIV), that cooperate to transfer electrons derived from NADH and succinate to molecular oxygen, creating an electrochemical gradient over the inner membrane that drives transmembrane transport and the ATP synthase. Cytochrome c oxidase is the component of the respiratory chain that catalyzes the reduction of oxygen to water. Electrons originating from reduced cytochrome c in the intermembrane space (IMS) are transferred via the dinuclear copper A center (CU(A)) of COX2 and heme A of COX1 to the active site in COX1, a binuclear center (BNC) formed by heme A3 and copper B (CU(B)). The BNC reduces molecular oxygen to 2 water molecules using 4 electrons from cytochrome c in the IMS and 4 protons from the mitochondrial matrix. COX3 is a catalytic core subunit. This is Cytochrome c oxidase subunit 3 (COX3) from Saccharomyces cerevisiae (strain ATCC 204508 / S288c) (Baker's yeast).